We begin with the raw amino-acid sequence, 373 residues long: Chaperone protein DnaJ (373 aa).

The 66-residue stretch at 5 to 70 (DYYEVLGVAK…QKRAAYDRYG (66 aa)) folds into the J domain. The CR-type zinc finger occupies 133–211 (GFDTEIRVPS…CDGVGRTRRN (79 aa)). Residues C146, C149, C163, C166, C185, C188, C199, and C202 each contribute to the Zn(2+) site. CXXCXGXG motif repeat units lie at residues 146 to 153 (CDTCHGSG), 163 to 170 (CRTCGGSG), 185 to 192 (CPTCHGTG), and 199 to 206 (CPSCDGVG).

This sequence belongs to the DnaJ family. In terms of assembly, homodimer. The cofactor is Zn(2+).

The protein localises to the cytoplasm. Functionally, participates actively in the response to hyperosmotic and heat shock by preventing the aggregation of stress-denatured proteins and by disaggregating proteins, also in an autonomous, DnaK-independent fashion. Unfolded proteins bind initially to DnaJ; upon interaction with the DnaJ-bound protein, DnaK hydrolyzes its bound ATP, resulting in the formation of a stable complex. GrpE releases ADP from DnaK; ATP binding to DnaK triggers the release of the substrate protein, thus completing the reaction cycle. Several rounds of ATP-dependent interactions between DnaJ, DnaK and GrpE are required for fully efficient folding. Also involved, together with DnaK and GrpE, in the DNA replication of plasmids through activation of initiation proteins. The polypeptide is Chaperone protein DnaJ (Bordetella bronchiseptica (strain ATCC BAA-588 / NCTC 13252 / RB50) (Alcaligenes bronchisepticus)).